A 173-amino-acid polypeptide reads, in one-letter code: Translation initiation factor IF-3 (173 aa).

It belongs to the IF-3 family. Monomer.

It is found in the cytoplasm. In terms of biological role, IF-3 binds to the 30S ribosomal subunit and shifts the equilibrium between 70S ribosomes and their 50S and 30S subunits in favor of the free subunits, thus enhancing the availability of 30S subunits on which protein synthesis initiation begins. The polypeptide is Translation initiation factor IF-3 (Campylobacter lari (strain RM2100 / D67 / ATCC BAA-1060)).